A 520-amino-acid chain; its full sequence is Keratin, type II cytoskeletal 78 (520 aa).

The tract at residues 1 to 110 (MSLSPCRAQR…DPQFQVVRTQ (110 aa)) is head. The tract at residues 111-146 (ETQEIRTLNNQFASFIDKVRFLEQQNKVLETKWHLL) is coil 1A. Residues 111–424 (ETQEIRTLNN…RLLEGEECRM (314 aa)) form the IF rod domain. The tract at residues 147 to 165 (QQQGLSGSQQGLEPVFEAC) is linker 1. The segment at 166 to 258 (LDQLRKQLEQ…LNEEELGQLQ (93 aa)) is coil 1B. A linker 12 region spans residues 259–281 (TQASDTSVVLSMDNNRYLDFSSI). A coil 2 region spans residues 282-421 (ITEVRARYEE…TYRRLLEGEE (140 aa)). The tail stretch occupies residues 422–520 (CRMSGECTSQ…ESSLKTSITY (99 aa)).

The protein belongs to the intermediate filament family. In terms of assembly, heterotetramer of two type I and two type II keratins. As to expression, in non-keratinising esophageal and vaginal epithelium, strongly expressed in the basal and parabasal/lower suprabasal cell layers with considerably decreased expression in the mid/upper suprabasal layers (at protein level). A similar gradient from basal to lower suprabasal layers is seen in the partially keratinised dorsal tongue epithelium, in the scalp and in the plantar epidermis (at protein level). Extension of expression into the suprabasal compartments is distinctly more pronounced in non-keratinising epithelia than in keratinising epithelia and epidermis (at protein level). In scalp sections, present in the interfollicular epidermis and infundibulum including the entire outer root sheath of the hair follicles and also in the sebocytes (at protein level). In sweat glands, expressed in peripheral and luminal cells of the lower duct and in peripheral cells of the middle/upper duct with no expression observed in luminal cells (at protein level). In embryos at the 14th week of pregnancy, detected in basal and parabasal layers but is absent from the uppermost epidermal layer (at protein level). Expressed in tongue epithelium.

The protein is Keratin, type II cytoskeletal 78 (KRT78) of Homo sapiens (Human).